A 523-amino-acid polypeptide reads, in one-letter code: ATP synthase subunit beta, mitochondrial (523 aa).

Residues 1-19 (MFSRVAKTSFSAVRAAKSQ) constitute a mitochondrion transit peptide. Residue 201–208 (GGAGVGKT) participates in ATP binding.

It belongs to the ATPase alpha/beta chains family. In terms of assembly, F-type ATPases have 2 components, CF(1) - the catalytic core - and CF(0) - the membrane proton channel. CF(1) has five subunits: alpha(3), beta(3), gamma(1), delta(1), epsilon(1). CF(0) has three main subunits: a, b and c.

The protein localises to the mitochondrion. Its subcellular location is the mitochondrion inner membrane. The enzyme catalyses ATP + H2O + 4 H(+)(in) = ADP + phosphate + 5 H(+)(out). In terms of biological role, mitochondrial membrane ATP synthase (F(1)F(0) ATP synthase or Complex V) produces ATP from ADP in the presence of a proton gradient across the membrane which is generated by electron transport complexes of the respiratory chain. F-type ATPases consist of two structural domains, F(1) - containing the extramembraneous catalytic core, and F(0) - containing the membrane proton channel, linked together by a central stalk and a peripheral stalk. During catalysis, ATP synthesis in the catalytic domain of F(1) is coupled via a rotary mechanism of the central stalk subunits to proton translocation. Subunits alpha and beta form the catalytic core in F(1). Rotation of the central stalk against the surrounding alpha(3)beta(3) subunits leads to hydrolysis of ATP in three separate catalytic sites on the beta subunits. The sequence is that of ATP synthase subunit beta, mitochondrial from Hemicentrotus pulcherrimus (Sea urchin).